A 669-amino-acid chain; its full sequence is UvrABC system protein B (669 aa).

Positions 26–183 (EGLEDGLAHQ…RRLADLQYTR (158 aa)) constitute a Helicase ATP-binding domain. 39–46 (GVTGSGKT) serves as a coordination point for ATP. The Beta-hairpin signature appears at 92–115 (YYDYYQPEAYVPSSDTFIEKDASV). The Helicase C-terminal domain occupies 431 to 593 (QVDDLLSEIR…IVPKGLNKKI (163 aa)). The 36-residue stretch at 629-664 (EKEIQRLETEMYQHAKDLEFEKAAQTRDKLQTLRAQ) folds into the UVR domain.

The protein belongs to the UvrB family. In terms of assembly, forms a heterotetramer with UvrA during the search for lesions. Interacts with UvrC in an incision complex.

Its subcellular location is the cytoplasm. The UvrABC repair system catalyzes the recognition and processing of DNA lesions. A damage recognition complex composed of 2 UvrA and 2 UvrB subunits scans DNA for abnormalities. Upon binding of the UvrA(2)B(2) complex to a putative damaged site, the DNA wraps around one UvrB monomer. DNA wrap is dependent on ATP binding by UvrB and probably causes local melting of the DNA helix, facilitating insertion of UvrB beta-hairpin between the DNA strands. Then UvrB probes one DNA strand for the presence of a lesion. If a lesion is found the UvrA subunits dissociate and the UvrB-DNA preincision complex is formed. This complex is subsequently bound by UvrC and the second UvrB is released. If no lesion is found, the DNA wraps around the other UvrB subunit that will check the other stand for damage. The chain is UvrABC system protein B from Proteus mirabilis (strain HI4320).